We begin with the raw amino-acid sequence, 68 residues long: Protein transport protein Sec61 subunit gamma (68 aa).

Met-1 carries the post-translational modification N-acetylmethionine. Over 1 to 32 the chain is Cytoplasmic; that stretch reads MDQVMQFVEPSRQFVKDSIRLVKRCTKPDRKE. The residue at position 18 (Ser-18) is a Phosphoserine. The helical transmembrane segment at 33-61 threads the bilayer; it reads FQKIAMATAIGFAIMGFIGFFVKLIHIPI. Residues 62-68 are Extracellular-facing; sequence NNIIVGG.

Belongs to the SecE/SEC61-gamma family. In terms of assembly, the SEC61 channel-forming translocon complex consists of channel-forming core components SEC61A1, SEC61B and SEC61G and different auxiliary components such as SEC62 and SEC63. The SEC61 channel associates with the multi-pass translocon (MPT) complex.

It is found in the endoplasmic reticulum membrane. Functionally, component of SEC61 channel-forming translocon complex that mediates transport of signal peptide-containing precursor polypeptides across the endoplasmic reticulum (ER). Forms a ribosome receptor and a gated pore in the ER membrane, both functions required for cotranslational translocation of nascent polypeptides. The SEC61 channel is also involved in ER membrane insertion of transmembrane proteins: it mediates membrane insertion of the first few transmembrane segments of proteins, while insertion of subsequent transmembrane regions of multi-pass membrane proteins is mediated by the multi-pass translocon (MPT) complex. The SEC61 channel cooperates with the translocating protein TRAM1 to import nascent proteins into the ER. The protein is Protein transport protein Sec61 subunit gamma (SEC61G) of Bos taurus (Bovine).